The primary structure comprises 551 residues: E3 ubiquitin-protein ligase HEL1 (551 aa).

Positions 175 to 388 (NDFTCIICCD…KNFFQCTMYK (214 aa)) are TRIAD supradomain. Zn(2+) contacts are provided by Cys179, Cys182, Cys200, Cys203, Cys301, Cys304, His309, Cys314, Cys341, and Cys344. The RING-type 1 zinc-finger motif lies at 179–225 (CIICCDKKDTETFALECGHEYCINCYRHYIKDKLHEGNIITCMDCSL). The IBR-type zinc-finger motif lies at 242 to 314 (SKLMDSSIKS…GFEVHSPADC (73 aa)). Residues 341 to 370 (CPKCSVNIEKNGGCNHMVCSSCKYEFCWIC) form an RING-type 2; atypical zinc finger. Cys354 is an active-site residue. Positions 359, 362, 367, 370, 377, and 384 each coordinate Zn(2+).

The protein belongs to the RBR family. In terms of assembly, interacts with the E2 ubiquitin-conjugating enzyme UBC4 and histones H3 and H4.

The catalysed reaction is [E2 ubiquitin-conjugating enzyme]-S-ubiquitinyl-L-cysteine + [acceptor protein]-L-lysine = [E2 ubiquitin-conjugating enzyme]-L-cysteine + [acceptor protein]-N(6)-ubiquitinyl-L-lysine.. It participates in protein modification; protein ubiquitination. Its function is as follows. Probable ubiquitin-protein ligase involved in the degradation-related ubiquitination of histones. Contributes to the post-translational regulation of histone protein levels by polyubiquitination of excess histones for subsequent degradation. The protein is E3 ubiquitin-protein ligase HEL1 of Saccharomyces cerevisiae (strain ATCC 204508 / S288c) (Baker's yeast).